The chain runs to 191 residues: Aminodeoxychorismate synthase component 2 (191 aa).

Positions 1 to 191 (MLLLIDNYDS…HQLLDNFLNR (191 aa)) constitute a Glutamine amidotransferase type-1 domain. Active-site residues include Cys79, His172, and Glu174.

Monomer. Heterodimer consisting of two non-identical subunits: a glutamine amidotransferase subunit (PabA) and a aminodeoxychorismate synthase subunit (PabB).

It catalyses the reaction chorismate + L-glutamine = 4-amino-4-deoxychorismate + L-glutamate. It participates in cofactor biosynthesis; tetrahydrofolate biosynthesis; 4-aminobenzoate from chorismate: step 1/2. In terms of biological role, part of a heterodimeric complex that catalyzes the two-step biosynthesis of 4-amino-4-deoxychorismate (ADC), a precursor of p-aminobenzoate (PABA) and tetrahydrofolate. In the first step, a glutamine amidotransferase (PabA) generates ammonia as a substrate that, along with chorismate, is used in the second step, catalyzed by aminodeoxychorismate synthase (PabB) to produce ADC. PabA converts glutamine into glutamate only in the presence of stoichiometric amounts of PabB. This chain is Aminodeoxychorismate synthase component 2 (pabA), found in Serratia marcescens.